Here is a 1115-residue protein sequence, read N- to C-terminus: Receptor-type tyrosine-protein phosphatase H (1115 aa).

The signal sequence occupies residues 1 to 27; it reads MAGAGGGLGVWGNLVLLGLCSWTGARA. At 28–754 the chain is on the extracellular side; the sequence is PAPNPGRNLT…VVCHTESAGV (727 aa). 8 consecutive Fibronectin type-III domains span residues 32-121, 122-209, 210-299, 300-387, 388-477, 478-563, 564-666, and 665-749; these read PGRN…APNP, VRNL…TAHN, PVRN…APNP, VRNL…TAPN, PVRN…VPNA, VTSL…TAAT, APNE…TYPD, and PDTV…VCHT. 10 N-linked (GlcNAc...) asparagine glycosylation sites follow: Asn35, Asn83, Asn172, Asn256, Asn285, Asn350, Asn434, Asn468, Asn556, and Asn642. The chain crosses the membrane as a helical span at residues 755-775; the sequence is IAGAFVGILLFLILVGLLIFF. The Cytoplasmic portion of the chain corresponds to 776–1115; that stretch reads LKRRNKKKQQ…AAIQAHKLEV (340 aa). Residues 820-1079 form the Tyrosine-protein phosphatase domain; that stretch reads FADEYQQLSL…VFLHQCILRF (260 aa). Residue Cys1020 is the Phosphocysteine intermediate of the active site. Phosphotyrosine is present on residues Tyr1094 and Tyr1102.

It belongs to the protein-tyrosine phosphatase family. Receptor class 3 subfamily. As to quaternary structure, homodimer; disulfide-linked. Interacts with LCK. Interacts (phosphorylated form) with GRB2 (via SH2 domain). Interacts (phosphorylated form) with FYN (via SH2 domain). Interacts (via extracellular domain) with CEACAM20 (via extracellular domain); the interaction dephosphorylates CEACAM20. Expressed at high levels in the brain, spleen and liver and at lower levels in the heart and stomach. Expressed in pancreatic and colorectal cancer cells, but not in normal pancreas or colon. Expression in hepatocellular carcinoma is related to the differentiation status of the tumor and expression is inversely related to tumor aggressiveness.

The protein resides in the cell projection. The protein localises to the microvillus membrane. It localises to the apical cell membrane. It is found in the cytoplasm. The enzyme catalyses O-phospho-L-tyrosyl-[protein] + H2O = L-tyrosyl-[protein] + phosphate. Regulated by reversible dimerization. Dimerization reduces its catalytic activity. In terms of biological role, protein phosphatase that may contribute to contact inhibition of cell growth and motility by mediating the dephosphorylation of focal adhesion-associated substrates and thus negatively regulating integrin-promoted signaling processes. Induces apoptotic cell death by at least two distinct mechanisms: inhibition of cell survival signaling mediated by PI 3-kinase, Akt, and ILK and activation of a caspase-dependent proapoptotic pathway. Inhibits the basal activity of LCK and its activation in response to TCR stimulation and TCR-induced activation of MAP kinase and surface expression of CD69. Inhibits TCR-induced tyrosine phosphorylation of LAT and ZAP70. Inhibits both basal activity of DOK1 and its CD2-induced tyrosine phosphorylation. Induces dephosphorylation of BCAR1, focal adhesion kinase and SRC. Reduces migratory activity of activity of Jurkat cells. Reduces tyrosine phosphorylation of CEACAM20 and thereby contributes to suppress the intestinal immune response CEACAM20. The polypeptide is Receptor-type tyrosine-protein phosphatase H (PTPRH) (Homo sapiens (Human)).